Consider the following 276-residue polypeptide: N-acyl homoserine lactonase AiiB (276 aa).

Residues H111, H113, H116, H191, D213, and H259 each contribute to the Zn(2+) site.

This sequence belongs to the metallo-beta-lactamase superfamily. The cofactor is Zn(2+).

It carries out the reaction an N-acyl-L-homoserine lactone + H2O = an N-acyl-L-homoserine + H(+). The sequence is that of N-acyl homoserine lactonase AiiB from Agrobacterium fabrum (strain C58 / ATCC 33970) (Agrobacterium tumefaciens (strain C58)).